Reading from the N-terminus, the 206-residue chain is N-(5'-phosphoribosyl)anthranilate isomerase (206 aa).

The protein belongs to the TrpF family.

It carries out the reaction N-(5-phospho-beta-D-ribosyl)anthranilate = 1-(2-carboxyphenylamino)-1-deoxy-D-ribulose 5-phosphate. It participates in amino-acid biosynthesis; L-tryptophan biosynthesis; L-tryptophan from chorismate: step 3/5. The chain is N-(5'-phosphoribosyl)anthranilate isomerase from Citrifermentans bemidjiense (strain ATCC BAA-1014 / DSM 16622 / JCM 12645 / Bem) (Geobacter bemidjiensis).